The sequence spans 47 residues: ATP-dependent zinc metalloprotease FTSH, chloroplastic (47 aa).

It in the N-terminal section; belongs to the AAA ATPase family. This sequence in the C-terminal section; belongs to the peptidase M41 family. The cofactor is Zn(2+).

It localises to the plastid. It is found in the chloroplast membrane. Its function is as follows. Seems to act as an ATP-dependent zinc metallopeptidase. The sequence is that of ATP-dependent zinc metalloprotease FTSH, chloroplastic from Populus euphratica (Euphrates poplar).